Here is a 243-residue protein sequence, read N- to C-terminus: MAGFMNRMPSFLIEDQLRSGTISVIVGVDEVGYGAIAGPVVAAAVYLPERECDYIKDIKDSKALSSKKREELFCKITAHAKYGVGFARVREIEQHNILVASHISMKRALQNLGVKADLVLVDGSRAPAGLPWAVKTIVKGDSISTSIAAASIIAKVTRDRFMRRLHEQYPEYAWNQNCGYGTKAHMQSLKLYGKTAQHRSTFAPVKQLSSECEGAPPEQLELLSSTGIKTPVDGRGDAVATRD.

The RNase H type-2 domain occupies 23 to 217; it reads SVIVGVDEVG…LSSECEGAPP (195 aa). A divalent metal cation contacts are provided by D29, E30, and D122. A disordered region spans residues 223 to 243; sequence LSSTGIKTPVDGRGDAVATRD. The segment covering 232-243 has biased composition (basic and acidic residues); sequence VDGRGDAVATRD.

This sequence belongs to the RNase HII family. The cofactor is Mn(2+). It depends on Mg(2+) as a cofactor.

It is found in the cytoplasm. The enzyme catalyses Endonucleolytic cleavage to 5'-phosphomonoester.. In terms of biological role, endonuclease that specifically degrades the RNA of RNA-DNA hybrids. The polypeptide is Ribonuclease HII (Anaplasma marginale (strain St. Maries)).